Consider the following 203-residue polypeptide: MQPMTRNSRNSPGSRFPGAFAPEPDMDEPKSKSQKKRDMTALQALGAELEALAKDRLARVPMPEALADAIHEARRTTSHEGKRRQMQFVGKVMRGLEDDEVEAIRAALEGFKGTSKAETARMHLIERWRELLLADDAALTRFLAEHPGTDVQTVRNIIRSARREKELGKPPRYFRELFQAIKAALDEKDSAAGEQPPTPEPEA.

The segment covering 1–13 (MQPMTRNSRNSPG) has biased composition (polar residues). The segment at 1-39 (MQPMTRNSRNSPGSRFPGAFAPEPDMDEPKSKSQKKRDM) is disordered. Over residues 27-39 (DEPKSKSQKKRDM) the composition is skewed to basic and acidic residues.

The protein belongs to the DarP family.

It localises to the cytoplasm. Member of a network of 50S ribosomal subunit biogenesis factors which assembles along the 30S-50S interface, preventing incorrect 23S rRNA structures from forming. Promotes peptidyl transferase center (PTC) maturation. The chain is Dual-action ribosomal maturation protein DarP from Cupriavidus pinatubonensis (strain JMP 134 / LMG 1197) (Cupriavidus necator (strain JMP 134)).